The primary structure comprises 171 residues: Co-chaperone protein HscB (171 aa).

Positions 2–74 constitute a J domain; it reads DYFTLFGLPA…LTRAEYLLSL (73 aa).

It belongs to the HscB family. In terms of assembly, interacts with HscA and stimulates its ATPase activity. Interacts with IscU.

Its function is as follows. Co-chaperone involved in the maturation of iron-sulfur cluster-containing proteins. Seems to help targeting proteins to be folded toward HscA. The chain is Co-chaperone protein HscB from Klebsiella pneumoniae subsp. pneumoniae (strain ATCC 700721 / MGH 78578).